The sequence spans 398 residues: Putative transposase y4qJ (398 aa).

This sequence belongs to the transposase 32 family.

This chain is Putative transposase y4qJ, found in Sinorhizobium fredii (strain NBRC 101917 / NGR234).